Reading from the N-terminus, the 92-residue chain is Large ribosomal subunit protein uL23c (92 aa).

It belongs to the universal ribosomal protein uL23 family. As to quaternary structure, part of the 50S ribosomal subunit.

The protein localises to the plastid. The protein resides in the chloroplast. Functionally, binds to 23S rRNA. In Chara vulgaris (Common stonewort), this protein is Large ribosomal subunit protein uL23c (rpl23).